A 310-amino-acid chain; its full sequence is tRNA dimethylallyltransferase (310 aa).

ATP is bound at residue 10 to 17; the sequence is GPTAVGKS. 12-17 serves as a coordination point for substrate; sequence TAVGKS. Residues 35–38 form an interaction with substrate tRNA region; the sequence is DSMQ.

It belongs to the IPP transferase family. Monomer. Requires Mg(2+) as cofactor.

It catalyses the reaction adenosine(37) in tRNA + dimethylallyl diphosphate = N(6)-dimethylallyladenosine(37) in tRNA + diphosphate. Functionally, catalyzes the transfer of a dimethylallyl group onto the adenine at position 37 in tRNAs that read codons beginning with uridine, leading to the formation of N6-(dimethylallyl)adenosine (i(6)A). This is tRNA dimethylallyltransferase from Clostridium perfringens (strain SM101 / Type A).